The following is a 161-amino-acid chain: Allophycocyanin alpha chain 1 (161 aa).

N71 is modified (N4-methylasparagine). C81 is a (2R,3E)-phycocyanobilin binding site.

The protein belongs to the phycobiliprotein family. In terms of assembly, component of the phycobilisome. Heterodimer of an alpha and a beta chain. Contains one covalently linked bilin chromophore.

The protein localises to the cellular thylakoid membrane. Its function is as follows. Light-harvesting photosynthetic bile pigment-protein from the phycobiliprotein complex. Allophycocyanin has a maximum absorption at approximately 650 nanometers. This chain is Allophycocyanin alpha chain 1, found in Microchaete diplosiphon (Fremyella diplosiphon).